The chain runs to 429 residues: Tyrosine-protein kinase STYK1 (429 aa).

Residues 30 to 50 (VIIVPALLVGGFLILLAIILW) form a helical membrane-spanning segment. Residues 58 to 83 (SQRQSPGPRGTASVPASRGRSQEAAG) are disordered. One can recognise a Protein kinase domain in the interval 119 to 390 (LEVLEQIHSG…GQLLQRLEAA (272 aa)). ATP contacts are provided by residues 125 to 133 (IHSGSCGTL) and K152. D256 serves as the catalytic Proton acceptor.

The protein belongs to the protein kinase superfamily. Tyr protein kinase family. In terms of tissue distribution, highly expressed in colon and small intestine. Weakly or not expressed in spleen, skeletal muscle, liver, kidney, heart and brain. Expressed in transformed kidney cell lines (COS-1 and HEK293T).

The protein resides in the membrane. The catalysed reaction is L-tyrosyl-[protein] + ATP = O-phospho-L-tyrosyl-[protein] + ADP + H(+). Probable tyrosine protein-kinase, which has strong transforming capabilities on a variety of cell lines including NIH 3T3 fibroblasts and on athymic nude mice. When overexpressed, it can also induce tumor cell invasion as well as metastasis in distant organs. May act by activating both MAP kinase and phosphatidylinositol 3'-kinases (PI3K) pathways. The polypeptide is Tyrosine-protein kinase STYK1 (Styk1) (Mus musculus (Mouse)).